The chain runs to 37 residues: Large ribosomal subunit protein bL36 (37 aa).

It belongs to the bacterial ribosomal protein bL36 family.

The chain is Large ribosomal subunit protein bL36 from Campylobacter jejuni subsp. jejuni serotype O:6 (strain 81116 / NCTC 11828).